Consider the following 236-residue polypeptide: Capsid protein (236 aa).

A disordered region spans residues 1-46; it reads MAASSRSTRGRKQRGRSVEAKSRAIRANPPVPRPNPQRNRPPPAGT. The interval 1 to 51 is r domain, interaction with RNA; sequence MAASSRSTRGRKQRGRSVEAKSRAIRANPPVPRPNPQRNRPPPAGTTCSMS. Over residues 29–44 the composition is skewed to pro residues; that stretch reads PPVPRPNPQRNRPPPA. The tract at residues 52–217 is s domain, virion shell; sequence EILLAVSATT…QIKISYSVSY (166 aa). The p domain, projecting stretch occupies residues 218 to 236; that stretch reads RGAAILQPALVPGPGLANH.

The protein belongs to the icosahedral plant coat protein family. Homomultimer.

The protein resides in the virion. Capsid protein self-assembles to form an icosahedral capsid with a T=3 symmetry, about 28-34 nm in diameter, and consisting of 180 capsid proteins. The chain is Capsid protein from Zea mays (Maize).